The chain runs to 309 residues: ADP-L-glycero-D-manno-heptose-6-epimerase (309 aa).

NADP(+)-binding positions include 10 to 11 (FI), 31 to 32 (DN), K38, K53, 75 to 79 (LGACS), and N92. Residue Y140 is the Proton acceptor of the active site. Residue K144 participates in NADP(+) binding. Position 169 (N169) interacts with substrate. Residues V170 and K178 each coordinate NADP(+). K178 functions as the Proton acceptor in the catalytic mechanism. Substrate-binding positions include S180, H187, 201–204 (FLGS), R209, and Y272.

Belongs to the NAD(P)-dependent epimerase/dehydratase family. HldD subfamily. Homopentamer. NADP(+) is required as a cofactor.

It carries out the reaction ADP-D-glycero-beta-D-manno-heptose = ADP-L-glycero-beta-D-manno-heptose. It participates in nucleotide-sugar biosynthesis; ADP-L-glycero-beta-D-manno-heptose biosynthesis; ADP-L-glycero-beta-D-manno-heptose from D-glycero-beta-D-manno-heptose 7-phosphate: step 4/4. Its function is as follows. Catalyzes the interconversion between ADP-D-glycero-beta-D-manno-heptose and ADP-L-glycero-beta-D-manno-heptose via an epimerization at carbon 6 of the heptose. This is ADP-L-glycero-D-manno-heptose-6-epimerase from Hamiltonella defensa subsp. Acyrthosiphon pisum (strain 5AT).